Consider the following 193-residue polypeptide: dCTP deaminase (193 aa).

DCTP-binding positions include 110 to 115 (RSSLAR), D128, 136 to 138 (VLE), Y171, K178, and Q182. The active-site Proton donor/acceptor is E138. A compositionally biased stretch (basic and acidic residues) spans 170 to 181 (PYNRRQDAKYRD). The disordered stretch occupies residues 170 to 193 (PYNRRQDAKYRDQQGAVASRIDKD).

Belongs to the dCTP deaminase family. Homotrimer.

It catalyses the reaction dCTP + H2O + H(+) = dUTP + NH4(+). It participates in pyrimidine metabolism; dUMP biosynthesis; dUMP from dCTP (dUTP route): step 1/2. In terms of biological role, catalyzes the deamination of dCTP to dUTP. The polypeptide is dCTP deaminase (Enterobacter sp. (strain 638)).